The sequence spans 495 residues: Mothers against decapentaplegic homolog 6 (495 aa).

Basic residues predominate over residues 1–15; sequence MFRSKRSGLVRRLWR. 2 disordered regions span residues 1–115 and 133–161; these read MFRS…PGWL and AAGA…RSRE. Arg-74 and Arg-81 each carry dimethylated arginine; alternate. An omega-N-methylarginine; alternate mark is found at Arg-74 and Arg-81. The 128-residue stretch at 149–276 folds into the MH1 domain; it reads PEPEEGGGPR…FSRLCGPESP (128 aa). Lys-174 participates in a covalent cross-link: Glycyl lysine isopeptide (Lys-Gly) (interchain with G-Cter in ubiquitin). Residues Cys-206, Cys-248, Cys-261, and His-266 each coordinate Zn(2+). An MH2 domain is found at 332–495; the sequence is WCSVAYWEHR…WLEILLNNHR (164 aa). Ser-436 is subject to Phosphoserine; by PRKX; in vitro.

It belongs to the dwarfin/SMAD family. In terms of assembly, interacts with NEDD4L. Interacts with WWP1. Interacts with STAMBP and PRKX. Interacts with RNF111 and AXIN1. Interacts with TGF-beta type I receptor superfamily members, including ACVR1B, BMPR1B and TGFBR1. In response to BMP2 treatment, interacts with SMAD1; this interaction may inhibit SMAD1-binding to SMAD4. Interacts with HOXC8 and HOXC9. Interacts with PELI1; this interaction interferes with PELI1 complex formation with TRAF6, IRAK1, IRAK4 and MYD88 in response to IL1B and hence negatively regulates IL1R-TLR signaling. Interacts with TSC22D1/TSC-22. Monoubiquitinated at Lys-174 by the E2/E3 hybrid ubiquitin-protein ligase UBE2O, leading to reduced binding affinity for the activated BMP type I receptor ACVR1/ALK2, thereby enhancing BMP7 and regulating adipocyte differentiation. Ubiquitinated by WWP1. Ubiquitinated by ARK2C, promoting proteasomal degradation, leading to enhance the BMP-Smad signaling. In terms of processing, arginine methylation by PRMT1, which is recruited by BMPR2, initiates BMP-Induced signaling and induces dissociation from the BMPR1B receptor at the cell surface leading to derepress downstream Smad1/Smad5 signaling. Post-translationally, phosphorylated by BMP type 1 receptor kinase and by PRKX. In terms of tissue distribution, ubiquitous in various organs, with higher levels in lung.

The protein localises to the nucleus. In terms of biological role, transforming growth factor-beta superfamily receptors signaling occurs through the Smad family of intracellular mediators. SMAD6 is an inhibitory Smad (i-Smad) that negatively regulates signaling downstream of type I transforming growth factor-beta. Acts as a mediator of TGF-beta and BMP anti-inflammatory activities. Suppresses IL1R-TLR signaling through its direct interaction with PEL1, preventing NF-kappa-B activation, nuclear transport and NF-kappa-B-mediated expression of pro-inflammatory genes. Blocks the BMP-SMAD1 signaling pathway by competing with SMAD4 for receptor-activated SMAD1-binding. Binds to regulatory elements in target promoter regions. This chain is Mothers against decapentaplegic homolog 6 (Smad6), found in Mus musculus (Mouse).